The sequence spans 315 residues: Protease HtpX homolog (315 aa).

The chain crosses the membrane as a helical span at residues 16–36; the sequence is LFMGIGYLIGGASGALIALVV. H130 lines the Zn(2+) pocket. The active site involves E131. Zn(2+) is bound at residue H134. A run of 2 helical transmembrane segments spans residues 145–165 and 172–192; these read ITATIAGAISMVAQFGMFFGG and GPGLIGSLALMILAPLGAMLV. E201 contributes to the Zn(2+) binding site. Positions 282-315 are disordered; that stretch reads GGGGASIGRPAGPSPRGAPRSPWSGQPRARGPWG. Over residues 288 to 303 the composition is skewed to low complexity; sequence IGRPAGPSPRGAPRSP.

Belongs to the peptidase M48B family. The cofactor is Zn(2+).

It localises to the cell inner membrane. The chain is Protease HtpX homolog from Rhodopseudomonas palustris (strain BisB5).